The primary structure comprises 257 residues: A-factor type gamma-butyrolactone 1'-reductase (1S-forming) (257 aa).

The active-site Proton acceptor is the Y161.

The protein belongs to the short-chain dehydrogenases/reductases (SDR) family. As to quaternary structure, homodimer.

The catalysed reaction is a (3R,4R)-3-[(1S)-1-hydroxyalkyl]-4-(hydroxymethyl)oxolan-2-one + NADP(+) = a (3R,4R)-3-alkanoyl-4-(hydroxymethyl)oxolan-2-one + NADPH + H(+). Functionally, involved in the biosynthesis of virginiae butanolide (VB), which regulates the production of antibiotic virginiamycin. Catalyzes the reduction of 6-dehydro-VB-A to VB-A, the last catalytic step in VB biosynthesis. In vitro, can use various synthetic A-factor-type analogs. The chain is A-factor type gamma-butyrolactone 1'-reductase (1S-forming) from Streptomyces virginiae (Streptomyces cinnamonensis).